Consider the following 162-residue polypeptide: Nucleotide-binding protein Franean1_6074 (162 aa).

Belongs to the YajQ family.

Functionally, nucleotide-binding protein. This is Nucleotide-binding protein Franean1_6074 from Parafrankia sp. (strain EAN1pec).